The following is a 171-amino-acid chain: Small ribosomal subunit protein mS25 (171 aa).

The protein belongs to the mitochondrion-specific ribosomal protein mS25 family. In terms of assembly, component of the mitochondrial ribosome small subunit (28S) which comprises a 12S rRNA and about 30 distinct proteins.

It localises to the mitochondrion. The chain is Small ribosomal subunit protein mS25 (Mrps25) from Rattus norvegicus (Rat).